The sequence spans 197 residues: Putative carbonic anhydrase YvdA (197 aa).

Zn(2+) is bound by residues Cys-41, Asp-43, His-99, and Cys-102.

This sequence belongs to the beta-class carbonic anhydrase family. Zn(2+) serves as cofactor.

The catalysed reaction is hydrogencarbonate + H(+) = CO2 + H2O. Functionally, reversible hydration of carbon dioxide. This is Putative carbonic anhydrase YvdA (yvdA) from Bacillus subtilis (strain 168).